We begin with the raw amino-acid sequence, 602 residues long: MLQQWLRQSPAAAGLLRCSRYRGPQAALLQLSPQRAPTYHAIRSLQTSAAESQERIPLRKQLKQGAKGLKAQKRQRRESEEASRQTWELTVGIEIHAQLNTETKLFSRASTSSTDTPNSNVALFDLAFPGSQPEFQAATLLPALRAAIALNCDIQPISRFDRKHYFYQDQPAGYQITQYYEPFARNGYIDLFKHDGIAPEDGDHVRIGIKQVQLEQDTAKSQEYPPSTQLLDFNRVSHPLIEIITMPQIHTPATAAACVRKIQSVLQSCSAVTTGMELGGLRADVNVSIRRRDEAPGTHQYGGIGGLGQRTEIKNLSSFKAVEDAIIAEKNRQIAVLESGGVIEGETRGWTIGSTETRKLRGKEGEVDYRYMPDPDLPPLYIGEDLVSGLRQALPTPPDELIELLAGSDYGLPIEDAKPLIELDDGARLEYYQDVVEILRSLQQDQDAKSRTILARVAGNWVLHEFGGLWTKADLAWDAHRVPPQTLAQIIDQLQRKRITGATAKQVLVMIFDGDRRSLPQLLEEENLLLRPLSREEYIALAETAMSQNPQMVEQIRSKNQLGKLGWFVGQMMRMGEKGRVEAQKADEILRELILGQSGSQP.

The N-terminal 52 residues, 1–52, are a transit peptide targeting the mitochondrion; sequence MLQQWLRQSPAAAGLLRCSRYRGPQAALLQLSPQRAPTYHAIRSLQTSAAES. Positions 61–83 are disordered; that stretch reads QLKQGAKGLKAQKRQRRESEEAS.

The protein belongs to the GatB/GatE family. GatB subfamily. Subunit of the heterotrimeric GatCAB amidotransferase (AdT) complex, composed of A, B and C subunits.

It localises to the mitochondrion. The catalysed reaction is L-glutamyl-tRNA(Gln) + L-glutamine + ATP + H2O = L-glutaminyl-tRNA(Gln) + L-glutamate + ADP + phosphate + H(+). In terms of biological role, allows the formation of correctly charged Gln-tRNA(Gln) through the transamidation of misacylated Glu-tRNA(Gln) in the mitochondria. The reaction takes place in the presence of glutamine and ATP through an activated gamma-phospho-Glu-tRNA(Gln). This is Glutamyl-tRNA(Gln) amidotransferase subunit B, mitochondrial from Aspergillus clavatus (strain ATCC 1007 / CBS 513.65 / DSM 816 / NCTC 3887 / NRRL 1 / QM 1276 / 107).